We begin with the raw amino-acid sequence, 677 residues long: Fermitin family homolog 1 (677 aa).

Residues 96–653 form the FERM domain; that stretch reads MLRLRLPNLK…HEYIGGYIFL (558 aa). Phosphoserine is present on residues Ser-170, Ser-179, and Ser-361. A PH domain is found at 377 to 473; that stretch reads KLFRPKKLLP…WMAACMLASK (97 aa).

The protein belongs to the kindlin family. As to quaternary structure, interacts with the cytoplasmic domain of integrins ITGB1 and ITGB3. As to expression, expressed in brain, skeletal muscle, kidney, colon, adrenal gland, prostate, and placenta. Weakly or not expressed in heart, thymus, spleen, liver, small intestine, bone marrow, lung and peripheral blood leukocytes. Overexpressed in some colon and lung tumors. In skin, it is localized within the epidermis and particularly in basal keratocytes. Not detected in epidermal melanocytes and dermal fibroblasts.

The protein resides in the cytoplasm. The protein localises to the cytoskeleton. Its subcellular location is the cell junction. It is found in the focal adhesion. It localises to the cell projection. The protein resides in the ruffle membrane. Functionally, involved in cell adhesion. Contributes to integrin activation. When coexpressed with talin, potentiates activation of ITGA2B. Required for normal keratinocyte proliferation. Required for normal polarization of basal keratinocytes in skin, and for normal cell shape. Required for normal adhesion of keratinocytes to fibronectin and laminin, and for normal keratinocyte migration to wound sites. May mediate TGF-beta 1 signaling in tumor progression. The sequence is that of Fermitin family homolog 1 (FERMT1) from Homo sapiens (Human).